Consider the following 287-residue polypeptide: HTH-type transcriptional regulator MurR (287 aa).

The HTH rpiR-type domain occupies 1–77 (MLYLAKMRNA…MALIEEYSVN (77 aa)). Residues 37-56 (SRNLAKQLEVSQSSIVKFAQ) constitute a DNA-binding region (H-T-H motif). Positions 128 to 268 (VINLISKARL…FVGMVQLNDV (141 aa)) constitute an SIS domain.

In terms of assembly, homotetramer.

Its pathway is amino-sugar metabolism; N-acetylmuramate degradation [regulation]. Represses the expression of the murPQ operon involved in the uptake and degradation of N-acetylmuramic acid (MurNAc). Binds to two adjacent inverted repeats within the operator region. MurNAc 6-phosphate, the substrate of MurQ, is the specific inducer that weakens binding of MurR to the operator. The protein is HTH-type transcriptional regulator MurR of Citrobacter koseri (strain ATCC BAA-895 / CDC 4225-83 / SGSC4696).